The chain runs to 436 residues: MVEVSAEVLAELELLKKENAKLRSQLDSQKSDKLPMSLQEFQRYGRQMIVEETSGIEGQLKLKNSKVLVIGAGGLGCPALLYLAGAGIGTIGIVDNDTVDNSNLHRQVLHDSSKVGMLKCESARQRINLLNPHVNVKTYPVRLDYSNAFTIFENYDYVLDCTDTPITRYLVSDVAVNLGMTVISASGLGSEGQLSILNFKNEGPCYRCFYPTPPPPNSVSSCQEGGVIGPCIGLVGTMMAVETLKVIYDIYTLENFKPFLMMYSGFPNQTLRTFKMRGRQNNCECCGLDPKITRAAIESGLVNYFEFCGSRNYNLCTDEERISSEIYKTEFIDCNEKDHILIDVRPRHHFNISHFNHAINIPVKELKGMKGSLDILKESVPNVSQDSKVIVLCRYGNDSQIATRLLKDEFKINDVKDVKGGFFKYIDEEDHSYPKY.

ATP-binding positions include Gly-74, Asp-95, 102 to 106 (SNLHR), Lys-119, and 163 to 164 (DT). Zn(2+) contacts are provided by Cys-205 and Cys-208. Catalysis depends on Cys-222, which acts as the Glycyl thioester intermediate; for adenylyltransferase activity. Residues Cys-283 and Cys-286 each contribute to the Zn(2+) site. Positions 335–434 (NEKDHILIDV…YIDEEDHSYP (100 aa)) constitute a Rhodanese domain. Residue Cys-393 is the Cysteine persulfide intermediate; for sulfurtransferase activity of the active site.

It in the N-terminal section; belongs to the HesA/MoeB/ThiF family. UBA4 subfamily. It depends on Zn(2+) as a cofactor.

It localises to the cytoplasm. The protein localises to the cytosol. The protein operates within tRNA modification; 5-methoxycarbonylmethyl-2-thiouridine-tRNA biosynthesis. Its function is as follows. Plays a central role in 2-thiolation of mcm(5)S(2)U at tRNA wobble positions of cytosolic tRNA(Lys), tRNA(Glu) and tRNA(Gln). Acts by mediating the C-terminal thiocarboxylation of sulfur carrier URM1. Its N-terminus first activates URM1 as acyl-adenylate (-COAMP), then the persulfide sulfur on the catalytic cysteine is transferred to URM1 to form thiocarboxylation (-COSH) of its C-terminus. The reaction probably involves hydrogen sulfide that is generated from the persulfide intermediate and that acts as a nucleophile towards URM1. Subsequently, a transient disulfide bond is formed. Does not use thiosulfate as sulfur donor; NFS1 probably acting as a sulfur donor for thiocarboxylation reactions. Prior mcm(5) tRNA modification by the elongator complex is required for 2-thiolation. May also be involved in protein urmylation. The chain is Adenylyltransferase and sulfurtransferase UBA4 from Vanderwaltozyma polyspora (strain ATCC 22028 / DSM 70294 / BCRC 21397 / CBS 2163 / NBRC 10782 / NRRL Y-8283 / UCD 57-17) (Kluyveromyces polysporus).